A 183-amino-acid polypeptide reads, in one-letter code: Large ribosomal subunit protein uL6 (183 aa).

This sequence belongs to the universal ribosomal protein uL6 family. In terms of assembly, part of the 50S ribosomal subunit.

Functionally, this protein binds to the 23S rRNA, and is important in its secondary structure. It is located near the subunit interface in the base of the L7/L12 stalk, and near the tRNA binding site of the peptidyltransferase center. The sequence is that of Large ribosomal subunit protein uL6 from Chlamydia trachomatis serovar L2 (strain ATCC VR-902B / DSM 19102 / 434/Bu).